We begin with the raw amino-acid sequence, 383 residues long: Putative F-box protein At3g22650 (383 aa).

Residues 3 to 50 form the F-box domain; that stretch reads SCERSLLPIDIIEEICCRIPVEYLTQFKLTCKQWFALLKDKRFIYKYL.

The chain is Putative F-box protein At3g22650 from Arabidopsis thaliana (Mouse-ear cress).